Consider the following 207-residue polypeptide: 8-oxoguanine DNA glycosylase/AP lyase (207 aa).

Active-site residues include Lys-128 and Asp-146.

The protein belongs to the type-2 OGG1 family.

It carries out the reaction 2'-deoxyribonucleotide-(2'-deoxyribose 5'-phosphate)-2'-deoxyribonucleotide-DNA = a 3'-end 2'-deoxyribonucleotide-(2,3-dehydro-2,3-deoxyribose 5'-phosphate)-DNA + a 5'-end 5'-phospho-2'-deoxyribonucleoside-DNA + H(+). In terms of biological role, catalyzes the excision of an oxidatively damaged form of guanine (7,8-dihydro-8-oxoguanine = 8-oxoG) from DNA. Also cleaves the DNA backbone at apurinic/apyrimidinic sites (AP sites). The chain is 8-oxoguanine DNA glycosylase/AP lyase from Saccharolobus islandicus (strain L.S.2.15 / Lassen #1) (Sulfolobus islandicus).